Reading from the N-terminus, the 160-residue chain is Transcription elongation factor GreA (160 aa).

A coiled-coil region spans residues 53-73; that stretch reads AREEQGMVEARIRDIEGRLQN.

The protein belongs to the GreA/GreB family.

Its function is as follows. Necessary for efficient RNA polymerase transcription elongation past template-encoded arresting sites. The arresting sites in DNA have the property of trapping a certain fraction of elongating RNA polymerases that pass through, resulting in locked ternary complexes. Cleavage of the nascent transcript by cleavage factors such as GreA or GreB allows the resumption of elongation from the new 3'terminus. GreA releases sequences of 2 to 3 nucleotides. The polypeptide is Transcription elongation factor GreA (Pseudomonas putida (strain ATCC 47054 / DSM 6125 / CFBP 8728 / NCIMB 11950 / KT2440)).